A 111-amino-acid chain; its full sequence is Entry-fusion complex protein OPG086 (111 aa).

The helical; Signal-anchor transmembrane segment at 1 to 21 (MASLLYLILFLLFVCISYYFT) threads the bilayer. At 22-111 (YYPTNKLQAA…TLLPILLLSK (90 aa)) the chain is on the virion surface side.

This sequence belongs to the orthopoxvirus OPG086 family. Interacts with OPG099/L5. Component of the entry fusion complex (EFC) composed of OPG053, OPG076, OPG086, OPG094, OPG095, OPG099, OPG107, OPG143, OPG104, OPG147 and OPG155. Except for OPG095 and OPG053, each of the EFC proteins is required for assembly or stability of the complex. Unglycosylated because produced in viral factories instead of the classic ER -Golgi route.

It localises to the virion membrane. In terms of biological role, component of the entry fusion complex (EFC), which consists of 11 proteins. During cell infection, this complex mediates entry of the virion core into the host cytoplasm by a two-step mechanism consisting of lipid mixing of the viral and cellular membranes and subsequent pore formation. In Vaccinia virus (strain Copenhagen) (VACV), this protein is Entry-fusion complex protein OPG086 (OPG086).